A 309-amino-acid polypeptide reads, in one-letter code: Malate dehydrogenase (309 aa).

NAD(+) is bound by residues 8–13 (GAGLVG) and Asp33. Substrate is bound by residues Arg82 and Arg88. NAD(+) contacts are provided by residues Asn95 and 118–120 (VSN). Substrate contacts are provided by Asn120 and Arg151. Residue His175 is the Proton acceptor of the active site.

Belongs to the LDH/MDH superfamily. MDH type 3 family.

It carries out the reaction (S)-malate + NAD(+) = oxaloacetate + NADH + H(+). Catalyzes the reversible oxidation of malate to oxaloacetate. This chain is Malate dehydrogenase, found in Pseudomonas putida (strain GB-1).